A 478-amino-acid polypeptide reads, in one-letter code: Proline--tRNA ligase (478 aa).

This sequence belongs to the class-II aminoacyl-tRNA synthetase family. ProS type 3 subfamily. Homodimer.

The protein localises to the cytoplasm. The catalysed reaction is tRNA(Pro) + L-proline + ATP = L-prolyl-tRNA(Pro) + AMP + diphosphate. Catalyzes the attachment of proline to tRNA(Pro) in a two-step reaction: proline is first activated by ATP to form Pro-AMP and then transferred to the acceptor end of tRNA(Pro). This is Proline--tRNA ligase from Ruminiclostridium cellulolyticum (strain ATCC 35319 / DSM 5812 / JCM 6584 / H10) (Clostridium cellulolyticum).